Reading from the N-terminus, the 748-residue chain is Histone-lysine N-methyltransferase EZH2 (748 aa).

Over residues 183–199 the composition is skewed to acidic residues; that stretch reads DYEDDEDGEDNQDDERD. 2 disordered regions span residues 183–215 and 347–428; these read DYED…KETL and TPPK…NIEP. Basic and acidic residues predominate over residues 200-215; that stretch reads DITKDQDDNMEEKETL. A compositionally biased stretch (basic residues) spans 348 to 359; the sequence is PPKRPSGRRRGR. The segment covering 376–387 has biased composition (basic and acidic residues); it reads EAKDTDSDREAG. The 103-residue stretch at 505–607 folds into the CXC domain; sequence CRKIQLKKDG…SKNVSCKNCS (103 aa). The SET domain occupies 614–729; that stretch reads KHLLLAPSDV…TGEELFFDYR (116 aa).

Belongs to the class V-like SAM-binding methyltransferase superfamily. Histone-lysine methyltransferase family. EZ subfamily. As to quaternary structure, component of the prc2/eed-ezh2 complex.

The protein localises to the nucleus. It carries out the reaction L-lysyl(27)-[histone H3] + 3 S-adenosyl-L-methionine = N(6),N(6),N(6)-trimethyl-L-lysyl(27)-[histone H3] + 3 S-adenosyl-L-homocysteine + 3 H(+). Its function is as follows. Polycomb group (PcG) protein. Catalytic subunit of the prc2/eed-ezh2 complex, which methylates 'Lys-9' and 'Lys-27' of histone H3, leading to transcriptional repression of the affected target gene. May regulate the circadian clock via histone methylation at the promoter of the circadian genes. This is Histone-lysine N-methyltransferase EZH2 (ezh2-b) from Xenopus laevis (African clawed frog).